Reading from the N-terminus, the 1381-residue chain is MEDVFSYFEKPKDPIRFNAIKISIASPDKILSWSYGEVKKPETINYRTFKPERDGLFCAKIFGPVKDYECLCGRYKRMKHRGVVCEKCGVEVIKSKVRRERMGHITLATPVAHIWFLKSLPSRIGNVLDLTLKELERILYFESWIVLDPRNTPLRKKDLLSDEEYNDLREQYGPDGFQAGIGAEAVRKLLEEVDLEGLDVELRDELKTASSDTKRKKVIKRLKVIEALRKSGNRPEWMILTVLPVIPPDLRPLVPLDGGRFATSDLNDLYRRVINRNNRLKRLQELNAPEIIIRNEKRMLQEAVDVLFDNGRRGRAITGTNKRPLKSLSDMLKGKQGRFRQNLLGKRVDYSGRSVITVGPDLRLHQCGLPKKMALELFKPFVYNRLQEKGYVTTVKSAKKMVERETAEVWDALDEVVREYPVMLNRAPTLHRLGLQAFEPVLIEGKAIQLHPLVCTAFNADFDGDQMAVHVPLSIEAQTEARVLMMSTNNILSPANGKPIIIPSQDVVLGIYYLTRSKEDVLGHGMSFSNPEEVRSAFDAGAVELRARIKVRIDDELKETTVGRVILYEIIPEAISFDVINKVMNKKELANLIDYCYRLCGEKTTVILADRLKDMGFKYATHSGMSFAVRNLNIPKNKKDIVVRADRDVLEIQKQYMDGLITDGERYNKVIDLWAQATEKIASEMMGGIETEEQITTEGKKVVESFNPIYMMADSGARGSNAQIRQLAGMRGLMAKPSGEIIETPITANFREGLTVLQYFISTHGARKGLADTALKTANSGYLTRRLVDVAQDCIITQQDCGTVDGISVSALMEGGEIIETAGERVLGRVVLEDIMDPFTGEVLVGANQEIDESLSEKIDRAGIESVRIRSVLTCKAKYGVCARCYGRDLGHGHLVNIGEAVGIIAAQSIGEPGTQLTMRTFHIGGTAKFEEHSTLDSRHDGIVKYVDLNYVVSKIGETVVMSRHGEIHVLDEQLRSRGKYTVPYGAHLKVKDGQSVKRGDRMAEWDPFSIPILAEVDGTVKFGDIIEGKTMQEQVDEVTGLSRKVIVEFKGADLRPRVSLKDATGKTAKVPGTNAAARHLLSVGVNIVVSEGDQVKAGDIIAKIPRETTKTKDITGGLPRVAELFEARKPKDFAVISEIDGVVSYGKDAKGKRKVIVTPEIGDEKEYLIPKGKHVSVQEGDRVIAGEALMSGVNNPHDLLMIKGEKALARYLVDEVQEVYRLQGVKINDKHMEVIVRQMLRRVKVIDPGDTPFMADEQVEKFRFQEENEKAIARGEQPAIGEPVLLGITKASLSTQSFISAASFQETTRVLTEASLAGKVDYLRGLKENVIMGRLIPAGTGLVMYRKLGIKTVADEDAESVEIEGDENSNKKSLDMHAAN.

The Zn(2+) site is built by Cys-70, Cys-72, Cys-85, and Cys-88. 3 residues coordinate Mg(2+): Asp-461, Asp-463, and Asp-465. The Zn(2+) site is built by Cys-801, Cys-875, Cys-882, and Cys-885. The interval 1362 to 1381 (VEIEGDENSNKKSLDMHAAN) is disordered. Residues 1369-1381 (NSNKKSLDMHAAN) show a composition bias toward basic and acidic residues.

The protein belongs to the RNA polymerase beta' chain family. In terms of assembly, the RNAP catalytic core consists of 2 alpha, 1 beta, 1 beta' and 1 omega subunit. When a sigma factor is associated with the core the holoenzyme is formed, which can initiate transcription. It depends on Mg(2+) as a cofactor. Requires Zn(2+) as cofactor.

The catalysed reaction is RNA(n) + a ribonucleoside 5'-triphosphate = RNA(n+1) + diphosphate. Its function is as follows. DNA-dependent RNA polymerase catalyzes the transcription of DNA into RNA using the four ribonucleoside triphosphates as substrates. The chain is DNA-directed RNA polymerase subunit beta' from Syntrophus aciditrophicus (strain SB).